The following is a 214-amino-acid chain: Adenylate kinase (214 aa).

Residue 10–15 coordinates ATP; that stretch reads GAGKGT. An NMP region spans residues 30 to 59; sequence STGDMLRSAVKAGTELGLKAKALMDHGKLV. Residues Thr31, Arg36, 57-59, 85-88, and Gln92 contribute to the AMP site; these read KLV and GFPR. The tract at residues 122–159 is LID; that stretch reads GRRIHAPSGRVYHIKFNPPVVENKDDVTGEELTVRKDD. ATP is bound by residues Arg123 and 132–133; that span reads VY. 2 residues coordinate AMP: Arg156 and Arg167. Arg200 serves as a coordination point for ATP.

The protein belongs to the adenylate kinase family. In terms of assembly, monomer.

The protein localises to the cytoplasm. It catalyses the reaction AMP + ATP = 2 ADP. Its pathway is purine metabolism; AMP biosynthesis via salvage pathway; AMP from ADP: step 1/1. Functionally, catalyzes the reversible transfer of the terminal phosphate group between ATP and AMP. Plays an important role in cellular energy homeostasis and in adenine nucleotide metabolism. The protein is Adenylate kinase of Photorhabdus laumondii subsp. laumondii (strain DSM 15139 / CIP 105565 / TT01) (Photorhabdus luminescens subsp. laumondii).